Consider the following 222-residue polypeptide: Ras-related protein Rab-41 (222 aa).

S41, V42, G43, K44, T45, S46, and T63 together coordinate GTP. T45 is a binding site for Mg(2+). Positions 58 to 66 are switch-I; sequence CACQATVGI. Residues T63 and D86 each coordinate Mg(2+). GTP is bound by residues G89, N144, K145, D147, S174, A175, and K176. A switch-II region spans residues 89–105; that stretch reads GQERFHSLIPSYIRDST. C222 carries S-geranylgeranyl cysteine lipidation.

This sequence belongs to the small GTPase superfamily. Rab family. The cofactor is Mg(2+). Widely expressed in brain, testis, lung, heart, ovary, colon, kidney, uterus and spleen but not in liver.

The protein localises to the cytoplasm. The catalysed reaction is GTP + H2O = GDP + phosphate + H(+). Regulated by guanine nucleotide exchange factors (GEFs) which promote the exchange of bound GDP for free GTP. Regulated by GTPase activating proteins (GAPs) which increase the GTP hydrolysis activity. Inhibited by GDP dissociation inhibitors (GDIs). In terms of biological role, the small GTPases Rab are key regulators of intracellular membrane trafficking, from the formation of transport vesicles to their fusion with membranes. Rabs cycle between an inactive GDP-bound form and an active GTP-bound form that is able to recruit to membranes different sets of downstream effectors directly responsible for vesicle formation, movement, tethering and fusion. RAB41 is required for normal Golgi ribbon organization and ER-to-Golgi trafficking. The protein is Ras-related protein Rab-41 of Homo sapiens (Human).